Here is a 195-residue protein sequence, read N- to C-terminus: MQPNITGVILAGGRSSRMGGNDKGLIPLNGKPLFQYVIDRFKPQVSDLVINANRNQGLYKESGIPVIDDIITGFVGPLAGMHAGLSYASTEWVVFAPCDVPALPSDLVSQLWQGKKQALAAYANDDERAHPTFALMHISLKTQLADYLIRGDRKLMLFLDSINAQRVKFSGKADLFSNLNTPADCDLWEQKRRGQ.

GTP contacts are provided by residues 10–12, lysine 23, asparagine 51, aspartate 69, and aspartate 99; that span reads LAG. Mg(2+) is bound at residue aspartate 99.

This sequence belongs to the MobA family. Monomer. Mg(2+) serves as cofactor.

The protein localises to the cytoplasm. The catalysed reaction is Mo-molybdopterin + GTP + H(+) = Mo-molybdopterin guanine dinucleotide + diphosphate. Functionally, transfers a GMP moiety from GTP to Mo-molybdopterin (Mo-MPT) cofactor (Moco or molybdenum cofactor) to form Mo-molybdopterin guanine dinucleotide (Mo-MGD) cofactor. This is Molybdenum cofactor guanylyltransferase from Yersinia pestis bv. Antiqua (strain Antiqua).